Reading from the N-terminus, the 604-residue chain is Ras guanine nucleotide exchange factor H (604 aa).

Residues 1 to 26 (MSNTNINVQSSTPKKSLGSSQYSLAG) are compositionally biased toward polar residues. Residues 1 to 61 (MSNTNINVQS…QENSIDDSGS (61 aa)) form a disordered region. The span at 27–49 (SSSSNLNNINNNNNNNNNNNNNS) shows a compositional bias: low complexity. The span at 50 to 61 (TGQENSIDDSGS) shows a compositional bias: polar residues. One can recognise a LisH domain in the interval 115–147 (NDTMLLKLIMQYFHEENLTTSLKKIQEETKVQF). Residues 221–335 (PDGTIKAATF…AVINLKIENY (115 aa)) form the N-terminal Ras-GEF domain. Positions 365-591 (DEEEIARQLC…EQPQLTLDLS (227 aa)) constitute a Ras-GEF domain.

Component of the Sca1 complex composed of at least gefA, gefH, scaA, phr, and the protein phosphatase 2A subunits pppA and pho2B. Interacts directly with gefA and phr.

It localises to the cell membrane. Its function is as follows. Promotes the exchange of Ras-bound GDP by GTP. Component of the Sca1 complex, a regulator of cell motility, chemotaxis and signal relay. The Sca1 complex is recruited to the plasma membrane in a chemoattractant- and F-actin-dependent manner and is enriched at the leading edge of chemotaxing cells where it regulates F-actin dynamics and signal relay by controlling the activation of rasC and the downstream target of rapamycin complex 2 (TORC2)-Akt/protein kinase B (PKB) pathway. This is Ras guanine nucleotide exchange factor H (gefH) from Dictyostelium discoideum (Social amoeba).